A 524-amino-acid polypeptide reads, in one-letter code: Inorganic phosphate transporter 1-1 (524 aa).

At 1 to 24 (MAEQQLGVLKALDVAKTQLYHFTA) the chain is on the cytoplasmic side. The helical transmembrane segment at 25 to 45 (IVIAGMGFFTDAYDLFCVSLV) threads the bilayer. At 46–70 (TKLLGRIYYFNPESAKPGSLPPHVA) the chain is on the extracellular side. The chain crosses the membrane as a helical span at residues 71–91 (AAVNGVALCGTLSGQLFFGWL). Residues 92–99 (GDKLGRKK) are Cytoplasmic-facing. A helical membrane pass occupies residues 100 to 120 (VYGLTLVMMILCSVASGLSFG). Topologically, residues 121–131 (HEAKGVMTTLC) are extracellular. Residues 132–152 (FFRFWLGFGIGGDYPLSATIM) form a helical membrane-spanning segment. At 153-161 (SEYANKKTR) the chain is on the cytoplasmic side. Residues 162 to 182 (GAFIAAVFAMQGVGILAGGFV) traverse the membrane as a helical segment. Over 183 to 211 (ALAVSSIFDKKFPAPTYAVNRALSTPPQV) the chain is Extracellular. The helical transmembrane segment at 212-232 (DYIWRIIVMFGALPAALTYYW) threads the bilayer. The Cytoplasmic portion of the chain corresponds to 233–292 (RMKMPETARYTALVAKNIKQATADMSKVLQTDIELEERVEDDVKDPKQNYGLFSKEFLRR). A helical membrane pass occupies residues 293–313 (HGLHLLGTTSTWFLLDIAFYS). Residues 314-348 (QNLFQKDIFSAIGWIPKAATMNATHEVFRIARAQT) are Extracellular-facing. A helical transmembrane segment spans residues 349–369 (LIALCSTVPGYWFTVAFIDTI). The Cytoplasmic segment spans residues 370-371 (GR). A helical membrane pass occupies residues 372–392 (FKIQLNGFFMMTVFMFAIAFP). Topologically, residues 393–402 (YNHWIKPENR) are extracellular. The helical transmembrane segment at 403–423 (IGFVVMYSLTFFFANFGPNAT) threads the bilayer. Residues 424–441 (TFIVPAEIFPARLRSTCH) lie on the Cytoplasmic side of the membrane. A helical transmembrane segment spans residues 442–462 (GISAAAGKAGAIVGAFGFLYA). Over 463-484 (AQSQDKAKVDAGYPPGIGVKNS) the chain is Extracellular. A helical membrane pass occupies residues 485–505 (LIMLGVLNFIGMLFTFLVPEP). Over 506–524 (KGKSLEELSGEAEVSHDEK) the chain is Cytoplasmic.

This sequence belongs to the major facilitator superfamily. Phosphate:H(+) symporter (TC 2.A.1.9) family. In terms of assembly, interacts with NLA. In terms of processing, ubiquitinated by NLA. Ubiquitination of PHT1-1 leads to its degradation by the proteasome. Mostly expressed in roots, especially in trichoblasts and in emerging secondary roots and root hairs, but not in root tips. Also present in hydathodes, axillary buds and peripheral endosperm of germinating seeds.

It localises to the cell membrane. Inhibited by protonophores (e.g. 2,4-dinitrophenol and carbonylcyanide m-chlorophenylhydrazone), the plasma membrane H(+)-ATPase inhibitor diethylstilbestorol, and the phosphate analog arsenate. In terms of biological role, high-affinity transporter for external inorganic phosphate. Acts as a H(+):phosphate symporter in both low- and high-Pi conditions. Confers sensitivity to arsenate. The chain is Inorganic phosphate transporter 1-1 (PHT1-1) from Arabidopsis thaliana (Mouse-ear cress).